The chain runs to 185 residues: 16S rRNA aminocarboxypropyltransferase (185 aa).

Positions 19, 69, 93, 108, and 112 each coordinate S-adenosyl-L-methionine.

It belongs to the TDD superfamily. TSR3 family.

It localises to the cytoplasm. The catalysed reaction is an N(1)-methylpseudouridine in rRNA + S-adenosyl-L-methionine = N(1)-methyl-N(3)-[(3S)-3-amino-3-carboxypropyl]pseudouridine in rRNA + S-methyl-5'-thioadenosine + H(+). Aminocarboxypropyltransferase that catalyzes the aminocarboxypropyl transfer on pseudouridine corresponding to position 914 in M.jannaschii 16S rRNA. It constitutes the last step in biosynthesis of the hypermodified N1-methyl-N3-(3-amino-3-carboxypropyl) pseudouridine (m1acp3-Psi). This is 16S rRNA aminocarboxypropyltransferase from Vulcanisaeta distributa (strain DSM 14429 / JCM 11212 / NBRC 100878 / IC-017).